Here is a 70-residue protein sequence, read N- to C-terminus: uncharacterized protein (70 aa).

This is an uncharacterized protein from Vaccinia virus (strain Copenhagen) (VACV).